A 94-amino-acid chain; its full sequence is DNA-directed RNA polymerase subunit omega (94 aa).

Belongs to the RNA polymerase subunit omega family. As to quaternary structure, consists of a sigma factor and the RNAP core enzyme which is composed of 2 alpha chains, 1 beta chain, 1 beta' chain and 1 subunit omega.

The catalysed reaction is RNA(n) + a ribonucleoside 5'-triphosphate = RNA(n+1) + diphosphate. In terms of biological role, promotes RNA polymerase assembly. Latches the N- and C-terminal regions of the beta' subunit thereby facilitating its interaction with the beta and alpha subunits. The protein is DNA-directed RNA polymerase subunit omega of Shewanella violacea (strain JCM 10179 / CIP 106290 / LMG 19151 / DSS12).